Here is a 123-residue protein sequence, read N- to C-terminus: Large ribosomal subunit protein eL8 (123 aa).

It belongs to the eukaryotic ribosomal protein eL8 family. Part of the 50S ribosomal subunit. Probably part of the RNase P complex.

It is found in the cytoplasm. Multifunctional RNA-binding protein that recognizes the K-turn motif in ribosomal RNA, the RNA component of RNase P, box H/ACA, box C/D and box C'/D' sRNAs. In Methanothermobacter thermautotrophicus (strain ATCC 29096 / DSM 1053 / JCM 10044 / NBRC 100330 / Delta H) (Methanobacterium thermoautotrophicum), this protein is Large ribosomal subunit protein eL8.